A 316-amino-acid chain; its full sequence is Protoheme IX farnesyltransferase (316 aa).

The segment at 1-21 (MAKSQALGNAPLTSTVAENAT) is disordered. Polar residues predominate over residues 11–21 (PLTSTVAENAT). 9 consecutive transmembrane segments (helical) span residues 42–62 (VVAMLLLTALVGMCLAVPGIP), 67–87 (VILGLIGIGFQSAAAAAFNHV), 115–135 (VVFASTLMVMGFVILLELNAL), 136–156 (TAWLTMASLVGYAVVYTVWLK), 163–183 (IVIGGIAGAAPPLLGWTAVTG), 189–209 (ALLLVMLVFTWTPPHFWALAI), 235–255 (MVLLYTVMLFIVGLLPWLTGM), 256–276 (SGGVYLVGSSLLNLGFIGYAL), and 295–315 (IWHLLALFVVLLGDHWITSLM).

Belongs to the UbiA prenyltransferase family. Protoheme IX farnesyltransferase subfamily.

The protein resides in the cell inner membrane. The catalysed reaction is heme b + (2E,6E)-farnesyl diphosphate + H2O = Fe(II)-heme o + diphosphate. The protein operates within porphyrin-containing compound metabolism; heme O biosynthesis; heme O from protoheme: step 1/1. Converts heme B (protoheme IX) to heme O by substitution of the vinyl group on carbon 2 of heme B porphyrin ring with a hydroxyethyl farnesyl side group. The polypeptide is Protoheme IX farnesyltransferase (Photobacterium profundum (strain SS9)).